The following is a 387-amino-acid chain: Chaperone protein DnaJ (387 aa).

Positions 6 to 71 (DYYEILGVPR…EKRRKYDQFG (66 aa)) constitute a J domain. A CR-type zinc finger spans residues 146–228 (GCEKEIPIYR…CGGTGTVRRQ (83 aa)). Residues Cys159, Cys162, Cys176, Cys179, Cys202, Cys205, Cys216, and Cys219 each coordinate Zn(2+). CXXCXGXG motif repeat units follow at residues 159–166 (CSVCGGSG), 176–183 (CQKCGGTG), 202–209 (CDACGGVG), and 216–223 (CRECGGTG).

It belongs to the DnaJ family. As to quaternary structure, homodimer. Zn(2+) serves as cofactor.

Its subcellular location is the cytoplasm. In terms of biological role, participates actively in the response to hyperosmotic and heat shock by preventing the aggregation of stress-denatured proteins and by disaggregating proteins, also in an autonomous, DnaK-independent fashion. Unfolded proteins bind initially to DnaJ; upon interaction with the DnaJ-bound protein, DnaK hydrolyzes its bound ATP, resulting in the formation of a stable complex. GrpE releases ADP from DnaK; ATP binding to DnaK triggers the release of the substrate protein, thus completing the reaction cycle. Several rounds of ATP-dependent interactions between DnaJ, DnaK and GrpE are required for fully efficient folding. Also involved, together with DnaK and GrpE, in the DNA replication of plasmids through activation of initiation proteins. This Caldicellulosiruptor saccharolyticus (strain ATCC 43494 / DSM 8903 / Tp8T 6331) protein is Chaperone protein DnaJ.